Consider the following 204-residue polypeptide: Ribosome maturation factor RimP (204 aa).

The tract at residues 176 to 204 is disordered; that stretch reads GNFDESQFDEIEESEGEEADEAEQPPTKH. Residues 181-198 show a composition bias toward acidic residues; that stretch reads SQFDEIEESEGEEADEAE.

It belongs to the RimP family.

Its subcellular location is the cytoplasm. Required for maturation of 30S ribosomal subunits. The polypeptide is Ribosome maturation factor RimP (Cereibacter sphaeroides (strain ATCC 17029 / ATH 2.4.9) (Rhodobacter sphaeroides)).